A 234-amino-acid polypeptide reads, in one-letter code: Orotidine 5'-phosphate decarboxylase (234 aa).

Substrate contacts are provided by residues Asp14, Lys36, 63–72 (DMKLLDIDNT), Thr118, Arg179, Gln188, Gly208, and Arg209. The active-site Proton donor is Lys65.

The protein belongs to the OMP decarboxylase family. Type 1 subfamily. In terms of assembly, homodimer.

The enzyme catalyses orotidine 5'-phosphate + H(+) = UMP + CO2. It functions in the pathway pyrimidine metabolism; UMP biosynthesis via de novo pathway; UMP from orotate: step 2/2. Its function is as follows. Catalyzes the decarboxylation of orotidine 5'-monophosphate (OMP) to uridine 5'-monophosphate (UMP). The polypeptide is Orotidine 5'-phosphate decarboxylase (Rhizobium meliloti (strain 1021) (Ensifer meliloti)).